Reading from the N-terminus, the 141-residue chain is Nucleoside diphosphate kinase (141 aa).

6 residues coordinate ATP: Lys11, Phe59, Arg87, Thr93, Arg104, and Asn114.

This sequence belongs to the NDK family. Homotetramer. Requires Mg(2+) as cofactor.

It localises to the cytoplasm. It carries out the reaction a 2'-deoxyribonucleoside 5'-diphosphate + ATP = a 2'-deoxyribonucleoside 5'-triphosphate + ADP. It catalyses the reaction a ribonucleoside 5'-diphosphate + ATP = a ribonucleoside 5'-triphosphate + ADP. Its function is as follows. Major role in the synthesis of nucleoside triphosphates other than ATP. The ATP gamma phosphate is transferred to the NDP beta phosphate via a ping-pong mechanism, using a phosphorylated active-site intermediate. This chain is Nucleoside diphosphate kinase, found in Saccharophagus degradans (strain 2-40 / ATCC 43961 / DSM 17024).